Reading from the N-terminus, the 434-residue chain is Serine--tRNA ligase (434 aa).

230–232 (TSE) contributes to the L-serine binding site. ATP is bound by residues 261–263 (RRE) and V277. L-serine is bound at residue E284. 348-351 (ELTS) lines the ATP pocket. An L-serine-binding site is contributed by T393.

This sequence belongs to the class-II aminoacyl-tRNA synthetase family. Type-1 seryl-tRNA synthetase subfamily. Homodimer. The tRNA molecule binds across the dimer.

Its subcellular location is the cytoplasm. It carries out the reaction tRNA(Ser) + L-serine + ATP = L-seryl-tRNA(Ser) + AMP + diphosphate + H(+). The catalysed reaction is tRNA(Sec) + L-serine + ATP = L-seryl-tRNA(Sec) + AMP + diphosphate + H(+). It functions in the pathway aminoacyl-tRNA biosynthesis; selenocysteinyl-tRNA(Sec) biosynthesis; L-seryl-tRNA(Sec) from L-serine and tRNA(Sec): step 1/1. Catalyzes the attachment of serine to tRNA(Ser). Is also able to aminoacylate tRNA(Sec) with serine, to form the misacylated tRNA L-seryl-tRNA(Sec), which will be further converted into selenocysteinyl-tRNA(Sec). In Kocuria rhizophila (strain ATCC 9341 / DSM 348 / NBRC 103217 / DC2201), this protein is Serine--tRNA ligase.